Consider the following 131-residue polypeptide: Methylglyoxal synthase (131 aa).

The 131-residue stretch at 1 to 131 folds into the MGS-like domain; it reads MKIALIAHDK…GDLDYRKLRK (131 aa). Substrate contacts are provided by residues H8, K12, 34–37, and 54–55; these read TGTT and SG. The Proton donor/acceptor role is filled by D60. H87 is a binding site for substrate.

It belongs to the methylglyoxal synthase family.

The enzyme catalyses dihydroxyacetone phosphate = methylglyoxal + phosphate. Catalyzes the formation of methylglyoxal from dihydroxyacetone phosphate. In Bacillus cereus (strain ATCC 14579 / DSM 31 / CCUG 7414 / JCM 2152 / NBRC 15305 / NCIMB 9373 / NCTC 2599 / NRRL B-3711), this protein is Methylglyoxal synthase.